The following is a 226-amino-acid chain: Sugar fermentation stimulation protein homolog (226 aa).

Belongs to the SfsA family.

The protein is Sugar fermentation stimulation protein homolog of Clostridium beijerinckii (strain ATCC 51743 / NCIMB 8052) (Clostridium acetobutylicum).